The following is a 477-amino-acid chain: Aspartyl/glutamyl-tRNA(Asn/Gln) amidotransferase subunit B (477 aa).

The protein belongs to the GatB/GatE family. GatB subfamily. In terms of assembly, heterotrimer of A, B and C subunits.

It catalyses the reaction L-glutamyl-tRNA(Gln) + L-glutamine + ATP + H2O = L-glutaminyl-tRNA(Gln) + L-glutamate + ADP + phosphate + H(+). It carries out the reaction L-aspartyl-tRNA(Asn) + L-glutamine + ATP + H2O = L-asparaginyl-tRNA(Asn) + L-glutamate + ADP + phosphate + 2 H(+). Functionally, allows the formation of correctly charged Asn-tRNA(Asn) or Gln-tRNA(Gln) through the transamidation of misacylated Asp-tRNA(Asn) or Glu-tRNA(Gln) in organisms which lack either or both of asparaginyl-tRNA or glutaminyl-tRNA synthetases. The reaction takes place in the presence of glutamine and ATP through an activated phospho-Asp-tRNA(Asn) or phospho-Glu-tRNA(Gln). The polypeptide is Aspartyl/glutamyl-tRNA(Asn/Gln) amidotransferase subunit B (Ligilactobacillus salivarius (strain UCC118) (Lactobacillus salivarius)).